The primary structure comprises 144 residues: Deoxyuridine 5'-triphosphate nucleotidohydrolase (144 aa).

Residues 63–65 (RSG), Asn76, and 80–82 (TID) contribute to the substrate site.

The protein belongs to the dUTPase family. The cofactor is Mg(2+).

The catalysed reaction is dUTP + H2O = dUMP + diphosphate + H(+). Its pathway is pyrimidine metabolism; dUMP biosynthesis; dUMP from dCTP (dUTP route): step 2/2. In terms of biological role, this enzyme is involved in nucleotide metabolism: it produces dUMP, the immediate precursor of thymidine nucleotides and it decreases the intracellular concentration of dUTP so that uracil cannot be incorporated into DNA. This is Deoxyuridine 5'-triphosphate nucleotidohydrolase from Porphyromonas gingivalis (strain ATCC 33277 / DSM 20709 / CIP 103683 / JCM 12257 / NCTC 11834 / 2561).